A 326-amino-acid chain; its full sequence is Serine protease 38 (326 aa).

Residues 1-32 (MAAPASVMGPLGPSALGLLLLLLVVAPPRVAA) form the signal peptide. Residues 33–59 (LVHRQPENQGISLTGSVACGRPSMEGK) constitute a propeptide, activation peptide. Positions 60 to 293 (ILGGVPAPER…FSKWICDNIE (234 aa)) constitute a Peptidase S1 domain. A disulfide bond links cysteine 85 and cysteine 101. Histidine 100 functions as the Charge relay system in the catalytic mechanism. Asparagine 125 carries an N-linked (GlcNAc...) asparagine glycan. Residue aspartate 150 is the Charge relay system of the active site. Disulfide bonds link cysteine 183/cysteine 251, cysteine 214/cysteine 230, and cysteine 241/cysteine 269. Serine 245 serves as the catalytic Charge relay system.

Belongs to the peptidase S1 family.

Its subcellular location is the secreted. The protein is Serine protease 38 (PRSS38) of Homo sapiens (Human).